The following is a 41-amino-acid chain: Large ribosomal subunit protein bL36 (41 aa).

It belongs to the bacterial ribosomal protein bL36 family.

The protein is Large ribosomal subunit protein bL36 of Sphingopyxis alaskensis (strain DSM 13593 / LMG 18877 / RB2256) (Sphingomonas alaskensis).